The chain runs to 505 residues: COMPASS component BRE2 (505 aa).

Positions 70-295 (SANPFFTILG…LKQETTNKEF (226 aa)) constitute a B30.2/SPRY domain. At serine 227 the chain carries Phosphoserine. The disordered stretch occupies residues 271-290 (EPWREDAENGPSRKKLKQET). A DNA-binding site is contributed by lysine 318. The interval 398 to 420 (RDESNDKNTTSAKKKKQQQKKKK) is disordered. Over residues 409–420 (AKKKKQQQKKKK) the composition is skewed to basic residues.

The protein belongs to the cclA family. Component of the Set1C/COMPASS complex which consists of SET1(2), BRE2(2), SPP1(2), SDC1(1), SHG1(1), SWD1(1), SWD2(1), and SWD3(1). Interacts directly with SDC1.

It localises to the nucleus. The protein localises to the chromosome. Its subcellular location is the telomere. Its function is as follows. Component of the Set1C/COMPASS complex that specifically mono-, di- and trimethylates histone H3 to form H3K4me1/2/3, which subsequently plays a role in telomere length maintenance and transcription elongation regulation. COMPASS recognizes ubiquitinated H2B on one face of the nucleosome which stimulates the methylation of H3 on the opposing face. The sequence is that of COMPASS component BRE2 from Saccharomyces cerevisiae (strain ATCC 204508 / S288c) (Baker's yeast).